Reading from the N-terminus, the 479-residue chain is tRNA modification GTPase MnmE (479 aa).

3 residues coordinate (6S)-5-formyl-5,6,7,8-tetrahydrofolate: arginine 30, glutamate 91, and lysine 130. The TrmE-type G domain maps to glycine 226 to alanine 402. K(+) is bound at residue asparagine 236. GTP is bound by residues asparagine 236–serine 241, threonine 255–threonine 261, and aspartate 280–glycine 283. Serine 240 lines the Mg(2+) pocket. 3 residues coordinate K(+): threonine 255, isoleucine 257, and threonine 260. Threonine 261 serves as a coordination point for Mg(2+). Residue lysine 479 coordinates (6S)-5-formyl-5,6,7,8-tetrahydrofolate.

This sequence belongs to the TRAFAC class TrmE-Era-EngA-EngB-Septin-like GTPase superfamily. TrmE GTPase family. As to quaternary structure, homodimer. Heterotetramer of two MnmE and two MnmG subunits. Requires K(+) as cofactor.

The protein localises to the cytoplasm. Functionally, exhibits a very high intrinsic GTPase hydrolysis rate. Involved in the addition of a carboxymethylaminomethyl (cmnm) group at the wobble position (U34) of certain tRNAs, forming tRNA-cmnm(5)s(2)U34. The chain is tRNA modification GTPase MnmE from Bdellovibrio bacteriovorus (strain ATCC 15356 / DSM 50701 / NCIMB 9529 / HD100).